The chain runs to 148 residues: Aspartate 1-decarboxylase (148 aa).

Ser-25 acts as the Schiff-base intermediate with substrate; via pyruvic acid in catalysis. Pyruvic acid (Ser) is present on Ser-25. Residue Thr-57 coordinates substrate. Catalysis depends on Tyr-58, which acts as the Proton donor. Residue 73–75 (GAA) coordinates substrate.

Belongs to the PanD family. Heterooctamer of four alpha and four beta subunits. The cofactor is pyruvate. In terms of processing, is synthesized initially as an inactive proenzyme, which is activated by self-cleavage at a specific serine bond to produce a beta-subunit with a hydroxyl group at its C-terminus and an alpha-subunit with a pyruvoyl group at its N-terminus.

It is found in the cytoplasm. It carries out the reaction L-aspartate + H(+) = beta-alanine + CO2. Its pathway is cofactor biosynthesis; (R)-pantothenate biosynthesis; beta-alanine from L-aspartate: step 1/1. Functionally, catalyzes the pyruvoyl-dependent decarboxylation of aspartate to produce beta-alanine. The sequence is that of Aspartate 1-decarboxylase from Rhodococcus erythropolis (strain PR4 / NBRC 100887).